The sequence spans 161 residues: Cyclic pyranopterin monophosphate synthase (161 aa).

Substrate is bound by residues 73–75 and 110–111; these read LCH and ME. Aspartate 125 is an active-site residue.

It belongs to the MoaC family. Homohexamer; trimer of dimers.

The catalysed reaction is (8S)-3',8-cyclo-7,8-dihydroguanosine 5'-triphosphate = cyclic pyranopterin phosphate + diphosphate. Its pathway is cofactor biosynthesis; molybdopterin biosynthesis. Catalyzes the conversion of (8S)-3',8-cyclo-7,8-dihydroguanosine 5'-triphosphate to cyclic pyranopterin monophosphate (cPMP). The protein is Cyclic pyranopterin monophosphate synthase of Pseudomonas syringae pv. tomato (strain ATCC BAA-871 / DC3000).